The sequence spans 656 residues: Fidgetin-like protein 1 (656 aa).

Residues 293 to 302 are compositionally biased toward polar residues; sequence KYSNQPQRNP. The tract at residues 293–354 is disordered; the sequence is KYSNQPQRNP…QGNSEMNAPS (62 aa). Residues 331-340 show a composition bias toward basic and acidic residues; the sequence is RQEDVQDSNR. ATP-binding positions include Ala-386 and 426–431; that span reads GTGKTL.

It belongs to the AAA ATPase family. As to quaternary structure, hexamer. It depends on Mg(2+) as a cofactor.

Its subcellular location is the nucleus. The protein resides in the cytoplasm. It is found in the perinuclear region. It carries out the reaction ATP + H2O = ADP + phosphate + H(+). May be involved in DNA double-strand break (DBS) repair via homologous recombination (HR). May regulate osteoblast proliferation and differentiation. The protein is Fidgetin-like protein 1 (fignl1) of Xenopus tropicalis (Western clawed frog).